A 1925-amino-acid polypeptide reads, in one-letter code: MARRAAGGAPPSARAAAAVPLRPRPHSRGPGLLPLPLLLLLGAARAGALEIQRRFPSPTPTNNFALDGTAGTVYLAAVNRLYQLSSANLSLEAEATVGPVPDSPLCHAPQLPQASCEHPRRLTDNYNKILQLDPGQGLVVACGSIYQGLCQLRRRGNISALAVSFPPAAPTAEPVTVFPSMLNVAANHPNASTVGLVLPPTSGTGGSRLLVGATYTGFGSAFFPRNRSLEDHRFENTPEIAIRSLDARGDLAKLFTFDLNPSDDNILKIKQGAKEQHKLGFVRAFLHPAVPPHSAQPYAYLALNSEARAGDKDSQARSLLARICLPRGAGGDAKKLTESYIQLGLQCAGGAGRGDLYSRLVSVFPAREQFFAVFERPQGAPGARNAPAALCAFRFDDVQAAIRAARTACFVEPAPDVVAVLDSVVQGTGPACESKRNIQLQPEQLDCGAAHLQHPLTILQPLRASPVFRAPGLTAVAVASANNYTAVFLGTATGRLLKISLNESMQVVSRRVLTVAYGEPVHHVMQFDPMDPGYLYLMTSHQMARVKVAACEVHSTCGDCVGAADAYCGWCTLETRCTLQQDCTNSSQPHFWTSASEGPSRCPAMTVLPSEIDVHRDYTGMILQISGSLPSLSGMEMACDYGNGVRTVARVPGPAYDHQIAYCNLLPRAQFPSFPAGQDHVTVEMSVRVKGHNIVSANFTIYDCSRIGQVYPHTACTSCLSTQWPCSWCIQLHSCVSNQSQCQDSPNPTSPQDCPQILPSPLAPVPTGGSQDILVPLTKATFFHGSSLECSFGLEESFEAVWANNSLVRCNQVVLHTTQKSQVFPLSLKLKGPPDRFLDSPNPMTVVVYNCAMGSPDCSQCLGREDLGHLCVWNDGCRLRGPLQPLPGTCPAPEIRAIEPLSGPLDGGTLLTIRGRNLGRRLSDVAHGVWIGSVACEPLADRYTVSEEIVCATGPAAGAFSDVVTVNVSKEGRSREQFSYVLPTVHSLEPSMGPKAGGTRITIHGSDLNVGSMLQVLVNDTDPCTDLTRTATSITCTVPGGTLPSPVPVCVRFESRGCVHGNLTFWYMQNPVITAISPGRSPVSGGRTITVAGERFHMVQNVSMAVHHIGREPTFCKVLNSTLITCPSPGALSNASAPVDFFINGRAYADEAAEELLDPAEAQRGSRFRLDYLPNPQFSTAKREKWIKHHPGEPLTLVIHKEQDSLGLESHEYHIKIGQVSCDIQIISDRVIHCSVNESLGTAEGQLPITIQVGNFNQTIATLQLGGSETAIVVSIVICSVLLLLSVVALFVFCTKSRRAERYWQKTLLQMEEMESQIREEIRKGFAELQTDMTDLTKELNRSQGIPFLEYKHFVTRTFFPKCSSLYEERYVLPSKTLNSQGGSPPQETHPLLGEWNIPEHCRPSMEEGISLFSSLLNNKHFLIVFVHALEQQKDFAVRDRCSLASLLTIALHGKLEYYTSIMKELLVDLIDASAAKNPKLMLRRTESVVEKMLTNWMSICMYGCLRETVGEPFFLLLCAIKQQINKGSIDAITGKARYTLNEEWLLRENIEAKPRNLNVSFQGCGMDSLSVRAMDTDTLTQVKEKILEAFCKNVPYSQWPRAEDVDLEWFASSTQSYVLRDLDDTSVVEDGRKKLNTLAHYKIPEGASLAMSLTDKKDSTLGRVKDLDTEKYFHLVLPTDELVEPKKSHRQSHRKKVLPEIYLTRLLSTKGTLQKFLDDLFKAILSIREDKPPLAVKYFFDFLEEQAEKRGISDPDTLHIWKTNSLPLRFWVNILKNPQFVFDIEKTDHIDACLSVIAQAFIDACSISDLQLGKDSPTNKLLYAKEIPEYRKTVQRYYKQIQDMTPLSEQEMNAHLAEESRKYQNEFNTNVAMAEIYKYAKRYRPQIMAALEANPTARRTQLQHKFEQVVALMENNIYECYSEA.

A compositionally biased stretch (low complexity) spans 1-21 (MARRAAGGAPPSARAAAAVPL). Positions 1–26 (MARRAAGGAPPSARAAAAVPLRPRPH) are disordered. An N-terminal signal peptide occupies residues 1 to 48 (MARRAAGGAPPSARAAAAVPLRPRPHSRGPGLLPLPLLLLLGAARAGA). The region spanning 49–548 (LEIQRRFPSP…TSHQMARVKV (500 aa)) is the Sema domain. Over 49-1271 (LEIQRRFPSP…TLQLGGSETA (1223 aa)) the chain is Extracellular. 2 disulfides stabilise this stretch: Cys106–Cys116 and Cys142–Cys150. Residues Asn157 and Asn226 are each glycosylated (N-linked (GlcNAc...) asparagine). 2 disulfide bridges follow: Cys324/Cys447 and Cys347/Cys391. The N-linked (GlcNAc...) asparagine glycan is linked to Asn483. Cystine bridges form between Cys551/Cys568, Cys557/Cys602, Cys560/Cys577, Cys571/Cys583, and Cys639/Cys663. 3 consecutive IPT/TIG domains span residues 893 to 977 (PEIR…SREQ), 983 to 1065 (PTVH…NLTF), and 1071 to 1145 (PVIT…FING). Asn967 carries an N-linked (GlcNAc...) asparagine glycan. N-linked (GlcNAc...) asparagine glycosylation is present at Asn1120. The helical transmembrane segment at 1272-1292 (IVVSIVICSVLLLLSVVALFV) threads the bilayer. Topologically, residues 1293–1925 (FCTKSRRAER…NNIYECYSEA (633 aa)) are cytoplasmic.

It belongs to the plexin family. As to quaternary structure, interacts with NRP1 and SEMA4A. Interacts with SH3BP1; they dissociate upon SEMA3E binding to PLXND1 allowing SH3BP1 to transduce downstream signal through RAC1 inactivation. Detected in embryonic heart and vascular endothelium, brain, dorsal root ganglia, adrenal gland, lung mesenchyme, small intestine and in the ossification centers of vertebral bodies.

It is found in the cell membrane. It localises to the cell projection. Its subcellular location is the lamellipodium membrane. In terms of biological role, cell surface receptor for SEMA4A and for class 3 semaphorins, such as SEMA3A, SEMA3C and SEMA3E. Plays an important role in cell-cell signaling, and in regulating the migration of a wide spectrum of cell types. Regulates the migration of thymocytes in the medulla. Regulates endothelial cell migration. Plays an important role in ensuring the specificity of synapse formation. Mediates anti-angiogenic signaling in response to SEMA3E. Required for normal development of the heart and vasculature. The chain is Plexin-D1 (Plxnd1) from Mus musculus (Mouse).